The sequence spans 806 residues: Leucine--tRNA ligase (806 aa).

The 'HIGH' region motif lies at 38-48; it reads PYPSGEIHMGH. The 'KMSKS' region motif lies at 572-576; sequence KMSKS. Residue Lys-575 coordinates ATP.

This sequence belongs to the class-I aminoacyl-tRNA synthetase family.

It localises to the cytoplasm. The enzyme catalyses tRNA(Leu) + L-leucine + ATP = L-leucyl-tRNA(Leu) + AMP + diphosphate. The protein is Leucine--tRNA ligase of Helicobacter pylori (strain HPAG1).